The primary structure comprises 370 residues: Queuine tRNA-ribosyltransferase (370 aa).

D89 acts as the Proton acceptor in catalysis. Substrate is bound by residues 89 to 93 (DSGGF), D143, Q187, and G214. The tract at residues 245–251 (GVGKPED) is RNA binding. The active-site Nucleophile is D264. An RNA binding; important for wobble base 34 recognition region spans residues 269-273 (TRNAR). 4 residues coordinate Zn(2+): C302, C304, C307, and H333.

It belongs to the queuine tRNA-ribosyltransferase family. In terms of assembly, homodimer. Within each dimer, one monomer is responsible for RNA recognition and catalysis, while the other monomer binds to the replacement base PreQ1. Zn(2+) is required as a cofactor.

It carries out the reaction 7-aminomethyl-7-carbaguanine + guanosine(34) in tRNA = 7-aminomethyl-7-carbaguanosine(34) in tRNA + guanine. It participates in tRNA modification; tRNA-queuosine biosynthesis. Catalyzes the base-exchange of a guanine (G) residue with the queuine precursor 7-aminomethyl-7-deazaguanine (PreQ1) at position 34 (anticodon wobble position) in tRNAs with GU(N) anticodons (tRNA-Asp, -Asn, -His and -Tyr). Catalysis occurs through a double-displacement mechanism. The nucleophile active site attacks the C1' of nucleotide 34 to detach the guanine base from the RNA, forming a covalent enzyme-RNA intermediate. The proton acceptor active site deprotonates the incoming PreQ1, allowing a nucleophilic attack on the C1' of the ribose to form the product. After dissociation, two additional enzymatic reactions on the tRNA convert PreQ1 to queuine (Q), resulting in the hypermodified nucleoside queuosine (7-(((4,5-cis-dihydroxy-2-cyclopenten-1-yl)amino)methyl)-7-deazaguanosine). In Baumannia cicadellinicola subsp. Homalodisca coagulata, this protein is Queuine tRNA-ribosyltransferase.